Here is a 757-residue protein sequence, read N- to C-terminus: Relaxin receptor 1 (757 aa).

The Extracellular segment spans residues 1-408 (MTSGSVFFYI…LENLLASIIQ (408 aa)). An LDL-receptor class A domain is found at 26 to 63 (KCSLGYFPCGNITKCLPQLLHCNGVDDCGNQADEDNCG). 3 disulfide bridges follow: Cys-27/Cys-40, Cys-34/Cys-53, and Cys-47/Cys-62. Asn-36 carries N-linked (GlcNAc...) asparagine glycosylation. Positions 45, 48, 50, 52, 58, and 59 each coordinate Ca(2+). Residues 91-127 (ETPECLVGSVPVQCLCRGLELDCDETNLRAVPSVSSN) enclose the LRRNT domain. Asn-127 carries an N-linked (GlcNAc...) asparagine glycan. LRR repeat units lie at residues 151 to 172 (DLQKLYLQNNKITSISIYAFRG), 175 to 196 (SLTKLYLSHNRITFLKPGVFED), 199 to 220 (RLEWLIIEDNHLSRISPPTFYG), 223 to 244 (SLILLVLMNNVLTRLPDKPLCQ), 248 to 269 (RLHWLDLEGNHIHNLRNLTLIS), 272 to 293 (NLTVLVMGKNKINHLNENTFAP), 296 to 317 (KLDELDLGSNKIENLPPLIFKD), 320 to 341 (ELSQLNLSYNPIQKIQANQFDY), and 344 to 365 (KLKSLSLEGIEISNIQQRMFRP). Residues Asn-264 and Asn-272 are each glycosylated (N-linked (GlcNAc...) asparagine). N-linked (GlcNAc...) asparagine glycosylation occurs at Asn-325. Asn-368 carries an N-linked (GlcNAc...) asparagine glycan. The helical transmembrane segment at 409 to 429 (RVFVWVVSAVTCFGNVFVICM) threads the bilayer. Topologically, residues 430 to 443 (RPYIRSENKLYAMS) are cytoplasmic. The chain crosses the membrane as a helical span at residues 444–464 (IISLCCADCLMGIYLFVIGGF). At 465 to 486 (DLKFRGEYNKHAQLWMESTHCQ) the chain is on the extracellular side. A disulfide bridge connects residues Cys-485 and Cys-563. Residues 487-507 (LVGSLAILSTEVSVLLLTFLT) form a helical membrane-spanning segment. At 508–527 (LEKYICIVYPFRCVRPGKCR) the chain is on the cytoplasmic side. A helical transmembrane segment spans residues 528–548 (TITVLILIWITGFIVAFIPLS). Residues 549 to 577 (NKEFFKNYYGTNGVCFPLHSEDTESIGAQ) are Extracellular-facing. Residues 578-598 (VYSVAIFLGINLAAFIIIVFS) form a helical membrane-spanning segment. Residues 599–629 (YGSMFYSVHQSAITATEIRNQVKKEMILAKR) lie on the Cytoplasmic side of the membrane. The helical transmembrane segment at 630–650 (FFFIVFTDALCWIPIFVVKFL) threads the bilayer. At 651 to 660 (SLLQVEIPGT) the chain is on the extracellular side. The chain crosses the membrane as a helical span at residues 661–681 (ITSWVVIFILPINSALNPILY). Topologically, residues 682 to 757 (TLTTRPFKEM…SQSTRLNSYS (76 aa)) are cytoplasmic.

It belongs to the G-protein coupled receptor 1 family. Interacts with C1QTNF8.

The protein localises to the cell membrane. In terms of biological role, receptor for relaxins. The activity of this receptor is mediated by G proteins leading to stimulation of adenylate cyclase and an increase of cAMP. Binding of the ligand may also activate a tyrosine kinase pathway that inhibits the activity of a phosphodiesterase that degrades cAMP. The chain is Relaxin receptor 1 (RXFP1) from Pongo abelii (Sumatran orangutan).